A 145-amino-acid chain; its full sequence is [Ribosomal protein bS18]-alanine N-acetyltransferase (145 aa).

An N-acetyltransferase domain is found at 1–145 (MIETIVEQDF…ENAVIMALYL (145 aa)). An acetyl-CoA-binding site is contributed by 67–69 (LAV). Glutamate 101 functions as the Proton acceptor in the catalytic mechanism. Residue asparagine 106 participates in acetyl-CoA binding. Residue tyrosine 113 is the Proton donor of the active site.

The protein belongs to the acetyltransferase family. RimI subfamily.

It is found in the cytoplasm. It carries out the reaction N-terminal L-alanyl-[ribosomal protein bS18] + acetyl-CoA = N-terminal N(alpha)-acetyl-L-alanyl-[ribosomal protein bS18] + CoA + H(+). In terms of biological role, acetylates the N-terminal alanine of ribosomal protein bS18. The protein is [Ribosomal protein bS18]-alanine N-acetyltransferase of Haemophilus ducreyi (strain 35000HP / ATCC 700724).